Consider the following 141-residue polypeptide: Large ribosomal subunit protein uL11 (141 aa).

This sequence belongs to the universal ribosomal protein uL11 family. As to quaternary structure, part of the ribosomal stalk of the 50S ribosomal subunit. Interacts with L10 and the large rRNA to form the base of the stalk. L10 forms an elongated spine to which L12 dimers bind in a sequential fashion forming a multimeric L10(L12)X complex. One or more lysine residues are methylated.

Functionally, forms part of the ribosomal stalk which helps the ribosome interact with GTP-bound translation factors. The polypeptide is Large ribosomal subunit protein uL11 (Limosilactobacillus fermentum (strain NBRC 3956 / LMG 18251) (Lactobacillus fermentum)).